The following is a 92-amino-acid chain: MAQKFHVKRGDQVVVIAGSQKGKSGKVLEVLAAKQRARIEGVAMIKRHLKKSQEHPQGTIAEREGSVHISNLMLQSTFDASKRKKEAAPAKA.

This sequence belongs to the universal ribosomal protein uL24 family. Part of the 50S ribosomal subunit.

In terms of biological role, one of two assembly initiator proteins, it binds directly to the 5'-end of the 23S rRNA, where it nucleates assembly of the 50S subunit. Its function is as follows. One of the proteins that surrounds the polypeptide exit tunnel on the outside of the subunit. This chain is Large ribosomal subunit protein uL24, found in Opitutus terrae (strain DSM 11246 / JCM 15787 / PB90-1).